The primary structure comprises 504 residues: MSSLTGKVKGRARKIKGDADIRVNESTENVGLVIRVMTAVVDIKFPSGKVPKILNALESKEIYNGKKLVLEVSQHISDSIVRCIALDSTDGLSRNDEFIDTGAPISVPVGRATLGRVFDVLGNPIDNCGPLTKSDYSIKPIYSEVPKLTDQKVTTEILVTGIKVIDLLAPYLKGGKVGLFGGAGVGKTVLIMELIHNIAKAHKGVSVFAGVGERTREGNDLYHEMIESGVINLEEKDKSQAVLVYGQMNEPPGARLRVALSALTMAEYFRDVENQDVLFFVDNIFRFTQSGSEISALLGRIPSAVGYQPTLAAEMGAMQERITSTNRGSITSVQAIYVPADDLTDPAPATSFAHLDSTTVLSRQIAELGIYPAVDPLDSASQALSIDIVGEKHYEVSKEVQRILQTYKSLQDIIAILGMEELSEEDKLIVARARKIQRFLSQPFHVAEVFTGTPGVFVSLEDTVSSFKDIVEGKYDHLPEAAFYMVSNINEAVKKAELLQKEGK.

181–188 (GGAGVGKT) contacts ATP.

This sequence belongs to the ATPase alpha/beta chains family. As to quaternary structure, F-type ATPases have 2 components, CF(1) - the catalytic core - and CF(0) - the membrane proton channel. CF(1) has five subunits: alpha(3), beta(3), gamma(1), delta(1), epsilon(1). CF(0) has three main subunits: a(1), b(2) and c(9-12). The alpha and beta chains form an alternating ring which encloses part of the gamma chain. CF(1) is attached to CF(0) by a central stalk formed by the gamma and epsilon chains, while a peripheral stalk is formed by the delta and b chains.

It is found in the cell inner membrane. It carries out the reaction ATP + H2O + 4 H(+)(in) = ADP + phosphate + 5 H(+)(out). Produces ATP from ADP in the presence of a proton gradient across the membrane. The catalytic sites are hosted primarily by the beta subunits. This Ehrlichia ruminantium (strain Gardel) protein is ATP synthase subunit beta.